The following is a 363-amino-acid chain: UDP-N-acetylglucosamine--N-acetylmuramyl-(pentapeptide) pyrophosphoryl-undecaprenol N-acetylglucosamine transferase (363 aa).

UDP-N-acetyl-alpha-D-glucosamine-binding positions include 10-12, N124, S195, I250, and Q295; that span reads TGG.

It belongs to the glycosyltransferase 28 family. MurG subfamily.

The protein localises to the cell membrane. It carries out the reaction di-trans,octa-cis-undecaprenyl diphospho-N-acetyl-alpha-D-muramoyl-L-alanyl-D-glutamyl-meso-2,6-diaminopimeloyl-D-alanyl-D-alanine + UDP-N-acetyl-alpha-D-glucosamine = di-trans,octa-cis-undecaprenyl diphospho-[N-acetyl-alpha-D-glucosaminyl-(1-&gt;4)]-N-acetyl-alpha-D-muramoyl-L-alanyl-D-glutamyl-meso-2,6-diaminopimeloyl-D-alanyl-D-alanine + UDP + H(+). It participates in cell wall biogenesis; peptidoglycan biosynthesis. In terms of biological role, cell wall formation. Catalyzes the transfer of a GlcNAc subunit on undecaprenyl-pyrophosphoryl-MurNAc-pentapeptide (lipid intermediate I) to form undecaprenyl-pyrophosphoryl-MurNAc-(pentapeptide)GlcNAc (lipid intermediate II). The sequence is that of UDP-N-acetylglucosamine--N-acetylmuramyl-(pentapeptide) pyrophosphoryl-undecaprenol N-acetylglucosamine transferase from Listeria welshimeri serovar 6b (strain ATCC 35897 / DSM 20650 / CCUG 15529 / CIP 8149 / NCTC 11857 / SLCC 5334 / V8).